The chain runs to 225 residues: Ribonuclease 3 (225 aa).

The RNase III domain occupies 7–129 (IPRLCRTLGY…IIGAIYLDSD (123 aa)). Mg(2+) is bound at residue E42. D46 is a catalytic residue. Mg(2+)-binding residues include D115 and E118. Residue E118 is part of the active site. The region spanning 155-225 (DPKTLLQEHL…AAQVLELIKK (71 aa)) is the DRBM domain.

This sequence belongs to the ribonuclease III family. Homodimer. The cofactor is Mg(2+).

Its subcellular location is the cytoplasm. It catalyses the reaction Endonucleolytic cleavage to 5'-phosphomonoester.. Its function is as follows. Digests double-stranded RNA. Involved in the processing of primary rRNA transcript to yield the immediate precursors to the large and small rRNAs (23S and 16S). Processes some mRNAs, and tRNAs when they are encoded in the rRNA operon. Processes pre-crRNA and tracrRNA of type II CRISPR loci if present in the organism. In Shewanella piezotolerans (strain WP3 / JCM 13877), this protein is Ribonuclease 3.